We begin with the raw amino-acid sequence, 312 residues long: Coiled-coil domain-containing protein 160 homolog (312 aa).

A coiled-coil region spans residues 126 to 281; the sequence is SEGAKFKNQL…EERKREKTHS (156 aa).

This sequence belongs to the CCDC160 family.

In Xenopus tropicalis (Western clawed frog), this protein is Coiled-coil domain-containing protein 160 homolog.